Consider the following 305-residue polypeptide: tRNA dimethylallyltransferase (305 aa).

Position 14–21 (14–21 (GPTASGKT)) interacts with ATP. Substrate is bound at residue 16–21 (TASGKT). Interaction with substrate tRNA stretches follow at residues 39-42 (DSAL), 163-167 (QRIIR), and 243-248 (RCVGYR).

It belongs to the IPP transferase family. Monomer. It depends on Mg(2+) as a cofactor.

It carries out the reaction adenosine(37) in tRNA + dimethylallyl diphosphate = N(6)-dimethylallyladenosine(37) in tRNA + diphosphate. Catalyzes the transfer of a dimethylallyl group onto the adenine at position 37 in tRNAs that read codons beginning with uridine, leading to the formation of N6-(dimethylallyl)adenosine (i(6)A). The polypeptide is tRNA dimethylallyltransferase (Vesicomyosocius okutanii subsp. Calyptogena okutanii (strain HA)).